An 849-amino-acid chain; its full sequence is Protein translocase subunit SecA (849 aa).

ATP is bound by residues Gln85, 103 to 107, and Asp493; that span reads GEGKT. Zn(2+) is bound by residues Cys832, Cys834, Cys843, and His844.

The protein belongs to the SecA family. Monomer and homodimer. Part of the essential Sec protein translocation apparatus which comprises SecA, SecYEG and auxiliary proteins SecDF. Other proteins may also be involved. It depends on Zn(2+) as a cofactor.

It is found in the cell membrane. Its subcellular location is the cytoplasm. The catalysed reaction is ATP + H2O + cellular proteinSide 1 = ADP + phosphate + cellular proteinSide 2.. Part of the Sec protein translocase complex. Interacts with the SecYEG preprotein conducting channel. Has a central role in coupling the hydrolysis of ATP to the transfer of proteins into and across the cell membrane, serving as an ATP-driven molecular motor driving the stepwise translocation of polypeptide chains across the membrane. This chain is Protein translocase subunit SecA, found in Streptococcus thermophilus (strain ATCC BAA-250 / LMG 18311).